We begin with the raw amino-acid sequence, 487 residues long: MDYFKNDLASIHDDLVNKKYSVEELTKSTFDNIKKVDKEIEAFLKLDEERALEKARKIDERGVKADSILDGIGIGIKDNIVTKDLTTTAASKMLENFEPIYNATVMDKLNDAGMITVGKLNMDEFAMGSSTENSAFKITKNVWDTTKVPGGSSGGSAAAVASGQVLASLGSDTGGSIRQPAAFNGIVGVKPTYGRVSRYGLIAFASSLDQIGPLTRTVKDNALVLNAISGHDAHDFTSSSREVPDFTKGIEDGVKGMRIAVPKEYFGEGVDEDVAKAVKDAVKTFESLGATVDEISLPHSKYGVPVYYIIASSEASSNLQRYDGIRYGFRAKDVKNLEDVYVRSRSEGFGDEVKRRIMLGTFSLSAGSYDAFFKKAAQVRTLICQDFENVYKDYDLILAPTSPTTAYGIGEEINDPVTMYMNDILTIPVNLAGLPGMSLPAGFSNGLPIGLQLIAPRFAESTMYRAGYAFEQSTDFHKAIPTLGGQN.

Residues Lys77 and Ser152 each act as charge relay system in the active site. Ser176 serves as the catalytic Acyl-ester intermediate.

It belongs to the amidase family. GatA subfamily. As to quaternary structure, heterotrimer of A, B and C subunits.

The catalysed reaction is L-glutamyl-tRNA(Gln) + L-glutamine + ATP + H2O = L-glutaminyl-tRNA(Gln) + L-glutamate + ADP + phosphate + H(+). Allows the formation of correctly charged Gln-tRNA(Gln) through the transamidation of misacylated Glu-tRNA(Gln) in organisms which lack glutaminyl-tRNA synthetase. The reaction takes place in the presence of glutamine and ATP through an activated gamma-phospho-Glu-tRNA(Gln). This Ligilactobacillus salivarius (strain UCC118) (Lactobacillus salivarius) protein is Glutamyl-tRNA(Gln) amidotransferase subunit A.